The following is a 199-amino-acid chain: uncharacterized protein (199 aa).

The N-terminal stretch at 1 to 23 is a signal peptide; that stretch reads MKPGCTLFFLLCSALTVTTEAHA.

This is an uncharacterized protein from Escherichia coli (strain K12).